Reading from the N-terminus, the 318-residue chain is Forkhead box protein I2 (318 aa).

A disordered region spans residues 1–30 (MATYCDDLGPSSAPPGQAQATAHPPGYEPG). Residues 102 to 196 (RPPYSYSALI…DNGNFRRKRK (95 aa)) constitute a DNA-binding region (fork-head).

Its subcellular location is the nucleus. Its function is as follows. Possible transcriptional activator. In Homo sapiens (Human), this protein is Forkhead box protein I2 (FOXI2).